The chain runs to 387 residues: Formate-dependent phosphoribosylglycinamide formyltransferase (387 aa).

N(1)-(5-phospho-beta-D-ribosyl)glycinamide contacts are provided by residues 12–13 and Glu72; that span reads EL. ATP is bound by residues Arg104, Lys145, 150-155, 185-188, and Glu193; these read SSGKGQ and EEFI. One can recognise an ATP-grasp domain in the interval 109 to 300; it reads DLAAKDLKLL…EFELHIRAIL (192 aa). The Mg(2+) site is built by Glu258 and Glu270. Residues Asp277, Lys348, and 355–356 each bind N(1)-(5-phospho-beta-D-ribosyl)glycinamide; that span reads RR.

It belongs to the PurK/PurT family. Homodimer.

It carries out the reaction N(1)-(5-phospho-beta-D-ribosyl)glycinamide + formate + ATP = N(2)-formyl-N(1)-(5-phospho-beta-D-ribosyl)glycinamide + ADP + phosphate + H(+). It participates in purine metabolism; IMP biosynthesis via de novo pathway; N(2)-formyl-N(1)-(5-phospho-D-ribosyl)glycinamide from N(1)-(5-phospho-D-ribosyl)glycinamide (formate route): step 1/1. Its function is as follows. Involved in the de novo purine biosynthesis. Catalyzes the transfer of formate to 5-phospho-ribosyl-glycinamide (GAR), producing 5-phospho-ribosyl-N-formylglycinamide (FGAR). Formate is provided by PurU via hydrolysis of 10-formyl-tetrahydrofolate. This is Formate-dependent phosphoribosylglycinamide formyltransferase from Leptospira borgpetersenii serovar Hardjo-bovis (strain JB197).